A 46-amino-acid chain; its full sequence is Probable butyrate kinase (46 aa).

The protein belongs to the acetokinase family.

Its subcellular location is the cytoplasm. The enzyme catalyses butanoate + ATP = butanoyl phosphate + ADP. This Geobacillus stearothermophilus (Bacillus stearothermophilus) protein is Probable butyrate kinase (buk).